The following is a 463-amino-acid chain: GTPase Der (463 aa).

Residues 1-20 are disordered; that stretch reads MDEGDEDLISGRGFTEGARK. EngA-type G domains are found at residues 27-190 and 202-375; these read GVLA…KQAE and RRVA…ESWD. Residues 33 to 40, 80 to 84, 142 to 145, 208 to 215, 255 to 259, and 320 to 323 contribute to the GTP site; these read GRPNVGKS, DTGGW, NKID, DTAGI, and NKWD. The KH-like domain occupies 376–458; it reads QRIPTGKLNA…PIQISVNIRE (83 aa).

Belongs to the TRAFAC class TrmE-Era-EngA-EngB-Septin-like GTPase superfamily. EngA (Der) GTPase family. In terms of assembly, associates with the 50S ribosomal subunit.

Its function is as follows. GTPase that plays an essential role in the late steps of ribosome biogenesis. The protein is GTPase Der of Bifidobacterium longum (strain NCC 2705).